A 635-amino-acid chain; its full sequence is Probable ethylene response sensor 2 (635 aa).

The next 3 membrane-spanning stretches (helical) occupy residues 24–44 (ISDF…IYFV), 59–79 (FGAF…TFAI), and 94–114 (ATAV…PDLL). Cu cation is bound by residues cysteine 66 and histidine 70. The region spanning 159–308 (DRHTILRTTL…VVADQVAVAL (150 aa)) is the GAF domain. Residues 351 to 589 (VMNHEMRTPM…MFFVKLGMPE (239 aa)) enclose the Histidine kinase domain. Residue histidine 354 is modified to Phosphohistidine; by autocatalysis.

Belongs to the ethylene receptor family. In terms of assembly, homodimer. The cofactor is Cu cation.

Its subcellular location is the endoplasmic reticulum membrane. The catalysed reaction is ATP + protein L-histidine = ADP + protein N-phospho-L-histidine.. In terms of biological role, ethylene receptor related to bacterial two-component regulators. Acts as a negative regulator of ethylene signaling. May play a role in the regulation of flowering by up-regulating GI (GIGANTEA) and RCN1 and regulate starch accumulation by down-regulating the alpha-amylase AMY3D. The protein is Probable ethylene response sensor 2 (ERS2) of Oryza sativa subsp. japonica (Rice).